The primary structure comprises 457 residues: tRNA-2-methylthio-N(6)-dimethylallyladenosine synthase (457 aa).

Positions 3 to 120 (KKVYVKTFGC…LPQMIDARRE (118 aa)) constitute an MTTase N-terminal domain. Residues C12, C49, C83, C157, C161, and C164 each coordinate [4Fe-4S] cluster. Residues 143–377 (RVEGPSAFVS…QATIEENVAR (235 aa)) form the Radical SAM core domain. The TRAM domain maps to 380 to 447 (QSMLGKVERI…PHSLRGELVL (68 aa)).

Belongs to the methylthiotransferase family. MiaB subfamily. In terms of assembly, monomer. The cofactor is [4Fe-4S] cluster.

Its subcellular location is the cytoplasm. The enzyme catalyses N(6)-dimethylallyladenosine(37) in tRNA + (sulfur carrier)-SH + AH2 + 2 S-adenosyl-L-methionine = 2-methylsulfanyl-N(6)-dimethylallyladenosine(37) in tRNA + (sulfur carrier)-H + 5'-deoxyadenosine + L-methionine + A + S-adenosyl-L-homocysteine + 2 H(+). Functionally, catalyzes the methylthiolation of N6-(dimethylallyl)adenosine (i(6)A), leading to the formation of 2-methylthio-N6-(dimethylallyl)adenosine (ms(2)i(6)A) at position 37 in tRNAs that read codons beginning with uridine. The chain is tRNA-2-methylthio-N(6)-dimethylallyladenosine synthase from Burkholderia thailandensis (strain ATCC 700388 / DSM 13276 / CCUG 48851 / CIP 106301 / E264).